The primary structure comprises 83 residues: Hepcidin-2 (83 aa).

A signal peptide spans 1–26 (MALSTRTQAACLLLLLLASLSSTTYL). A propeptide spanning residues 27–53 (QQQMRQTTELQPLHGEESRADIAIPMQ) is cleaved from the precursor. 4 disulfide bridges follow: C65/C81, C68/C71, C69/C77, and C72/C80.

The protein belongs to the hepcidin family. Highly expressed in the liver and to a much lesser extent in the heart. Also expressed in pancreas.

It localises to the secreted. Its function is as follows. Seems to act as a signaling molecule involved in the maintenance of iron homeostasis. The sequence is that of Hepcidin-2 (Hamp2) from Mus musculus (Mouse).